We begin with the raw amino-acid sequence, 304 residues long: Ribosomal RNA small subunit methyltransferase H (304 aa).

Residues 50 to 52 (GGH), D69, F97, D113, and Q120 contribute to the S-adenosyl-L-methionine site.

It belongs to the methyltransferase superfamily. RsmH family.

Its subcellular location is the cytoplasm. The enzyme catalyses cytidine(1402) in 16S rRNA + S-adenosyl-L-methionine = N(4)-methylcytidine(1402) in 16S rRNA + S-adenosyl-L-homocysteine + H(+). Functionally, specifically methylates the N4 position of cytidine in position 1402 (C1402) of 16S rRNA. The chain is Ribosomal RNA small subunit methyltransferase H from Rippkaea orientalis (strain PCC 8801 / RF-1) (Cyanothece sp. (strain PCC 8801)).